A 1061-amino-acid chain; its full sequence is Protein pid-5 (1061 aa).

It belongs to the peptidase M24B family. In terms of assembly, may interact with pid-2, app-1 and prmt-5.

It is found in the cytoplasm. Its subcellular location is the perinuclear region. It localises to the P-body. Together with pid-4, it is involved in gene silencing mediated by a class of 21 nucleotide PIWI-interacting RNAs (piRNAs) that possess a uracil residue at the 5'-end (also called 21U-RNAs) and guide the Piwi protein prg-1 to its DNA targets for silencing. Together with pid-4, it is required for the biogenesis of secondary and tertiary 22G-siRNAs. Specifically, promotes the production of 22G-siRNAs from the 5' end of target mRNAs. Together with pid-4, plays a role in small RNA-directed transgenerational epigenetic inheritance (also called RNAe) over several generations and germline immortality. Together with pid-4, plays a role in the formation of liquid-like condensates in the cytoplasm called Z granules. This is Protein pid-5 from Caenorhabditis elegans.